The sequence spans 363 residues: Ribosome-binding ATPase YchF (363 aa).

The OBG-type G domain occupies 3–256; the sequence is FKCGIVGLPN…LDDEEKVEFL (254 aa). 12–17 contacts ATP; the sequence is NVGKST. Ser-16 and Thr-36 together coordinate Mg(2+). In terms of domain architecture, TGS spans 278–361; the sequence is NLQTYFTAGV…QDGDVMHFRF (84 aa).

The cofactor is Mg(2+).

Functionally, ATPase that binds to both the 70S ribosome and the 50S ribosomal subunit in a nucleotide-independent manner. Does not hydrolyze GTP. This is Ribosome-binding ATPase YchF from Haemophilus influenzae (strain ATCC 51907 / DSM 11121 / KW20 / Rd).